The primary structure comprises 147 residues: MFDISFSEILVIAAVALIVIGPERLPKVARTLGHVFGWAQRYVNDVKSDIQREIELDELKKWKASVEETGRSIENSVHTELDKFRETVEAGAEASAMPPPTTAPAGESSPPQNSSPAPAEPAPPPVQSTKNSDPAGPGVNRERETAE.

The helical transmembrane segment at 1–21 (MFDISFSEILVIAAVALIVIG) threads the bilayer. The span at 67-88 (EETGRSIENSVHTELDKFRETV) shows a compositional bias: basic and acidic residues. The disordered stretch occupies residues 67 to 147 (EETGRSIENS…GVNRERETAE (81 aa)). Residues 103 to 117 (APAGESSPPQNSSPA) show a composition bias toward low complexity.

This sequence belongs to the TatB family. In terms of assembly, the Tat system comprises two distinct complexes: a TatABC complex, containing multiple copies of TatA, TatB and TatC subunits, and a separate TatA complex, containing only TatA subunits. Substrates initially bind to the TatABC complex, which probably triggers association of the separate TatA complex to form the active translocon.

It localises to the cell inner membrane. In terms of biological role, part of the twin-arginine translocation (Tat) system that transports large folded proteins containing a characteristic twin-arginine motif in their signal peptide across membranes. Together with TatC, TatB is part of a receptor directly interacting with Tat signal peptides. TatB may form an oligomeric binding site that transiently accommodates folded Tat precursor proteins before their translocation. This is Sec-independent protein translocase protein TatB from Nitrosospira multiformis (strain ATCC 25196 / NCIMB 11849 / C 71).